We begin with the raw amino-acid sequence, 462 residues long: Cysteine--tRNA ligase (462 aa).

Cysteine 29 provides a ligand contact to Zn(2+). The 'HIGH' region motif lies at methionine 31–histidine 41. Residues cysteine 217, histidine 242, and glutamate 246 each contribute to the Zn(2+) site. A 'KMSKS' region motif is present at residues lysine 274–serine 278. Lysine 277 provides a ligand contact to ATP.

This sequence belongs to the class-I aminoacyl-tRNA synthetase family. As to quaternary structure, monomer. The cofactor is Zn(2+).

It localises to the cytoplasm. It catalyses the reaction tRNA(Cys) + L-cysteine + ATP = L-cysteinyl-tRNA(Cys) + AMP + diphosphate. This is Cysteine--tRNA ligase from Polaromonas sp. (strain JS666 / ATCC BAA-500).